We begin with the raw amino-acid sequence, 593 residues long: Methionine--tRNA ligase, mitochondrial (593 aa).

The transit peptide at 1–29 (MLRTSVLRLLGRTGASRLSLLEDFGPRYY) directs the protein to the mitochondrion. The 'HIGH' region motif lies at 52-62 (FYVNAAPHIGH). Residues 347 to 351 (KMSKS) carry the 'KMSKS' region motif. ATP is bound at residue Lys350.

The protein belongs to the class-I aminoacyl-tRNA synthetase family.

The protein resides in the mitochondrion matrix. It catalyses the reaction tRNA(Met) + L-methionine + ATP = L-methionyl-tRNA(Met) + AMP + diphosphate. The sequence is that of Methionine--tRNA ligase, mitochondrial (MARS2) from Homo sapiens (Human).